A 543-amino-acid chain; its full sequence is Organic anion transporter 3 (543 aa).

Residues 1 to 21 (MTFAELVDRVGSKGPFQLLHT) lie on the Cytoplasmic side of the membrane. Residues 22–42 (VLLGLPILGMANHNLLQIFTA) form a helical membrane-spanning segment. The Extracellular segment spans residues 43-124 (PTPAHHCRPP…LVCSSSKLKE (82 aa)). An N-linked (GlcNAc...) asparagine glycan is attached at N81. Residues 125-145 (MAQSVFMAGILVGGLVLGALS) form a helical membrane-spanning segment. At 146–151 (DRFGRK) the chain is on the cytoplasmic side. A helical membrane pass occupies residues 152–172 (PILIFSYLLLGASGSGAAFSP). At 173-181 (TFSIYAVFR) the chain is on the extracellular side. The chain crosses the membrane as a helical span at residues 182–202 (FLCGFSISGISLSTAILNVEW). Residues 203-212 (VSTRFRAIKS) lie on the Cytoplasmic side of the membrane. A helical membrane pass occupies residues 213–233 (IAVGFFYTFGQFILPGLAYAI). Over 234-237 (PQWR) the chain is Extracellular. A helical membrane pass occupies residues 238 to 258 (WLQLTVSVPFLTFFLLSWWLP). Over 259 to 328 (ESIRWMVLSG…FRTPVLRRVT (70 aa)) the chain is Cytoplasmic. Residues 329 to 349 (LCLSLAWFATGFAYYSLAMGV) traverse the membrane as a helical segment. The Extracellular portion of the chain corresponds to 350 to 355 (EEFGVN). The chain crosses the membrane as a helical span at residues 356 to 376 (LYVLQLIFGGVDVPAKFITML). Over 377–388 (SISYLGRHITEG) the chain is Cytoplasmic. Residues 389 to 409 (IVLLLAGGCILALIFVPLDLM) traverse the membrane as a helical segment. Topologically, residues 410–412 (TLR) are extracellular. A helical membrane pass occupies residues 413-433 (TVLAVFGKGCLSGSFSCLFLY). The Cytoplasmic segment spans residues 434–472 (TSELYPTVIRQTGMGASNLWARVGSMTAPLVKITGELQP). The helical transmembrane segment at 473-493 (FIPNIIFGTIALLGGSAALFL) threads the bilayer. The Extracellular segment spans residues 494–543 (PETLNRPLPETIEDIETWSLRAKEPKPEPEAEKSSQRIPLQPCEPGPGPS). The tract at residues 513 to 543 (LRAKEPKPEPEAEKSSQRIPLQPCEPGPGPS) is disordered. Residues 514 to 528 (RAKEPKPEPEAEKSS) are compositionally biased toward basic and acidic residues.

Belongs to the major facilitator (TC 2.A.1) superfamily. Organic cation transporter (TC 2.A.1.19) family. In terms of tissue distribution, expressed in kidney.

It localises to the basolateral cell membrane. The enzyme catalyses estrone 3-sulfate(out) + glutarate(in) = estrone 3-sulfate(in) + glutarate(out). It catalyses the reaction estrone 3-sulfate(in) + 2-oxoglutarate(out) = estrone 3-sulfate(out) + 2-oxoglutarate(in). It carries out the reaction glutarate(in) + 2-oxoglutarate(out) = glutarate(out) + 2-oxoglutarate(in). The catalysed reaction is urate(in) + 2-oxoglutarate(out) = urate(out) + 2-oxoglutarate(in). The enzyme catalyses taurocholate(out) + glutarate(in) = taurocholate(in) + glutarate(out). It catalyses the reaction dehydroepiandrosterone 3-sulfate(out) + glutarate(in) = dehydroepiandrosterone 3-sulfate(in) + glutarate(out). It carries out the reaction prostaglandin F2alpha(out) + glutarate(in) = prostaglandin F2alpha(in) + glutarate(out). The catalysed reaction is prostaglandin F2alpha(out) + 2-oxoglutarate(in) = prostaglandin F2alpha(in) + 2-oxoglutarate(out). The enzyme catalyses (R)-carnitine(out) + 2-oxoglutarate(in) = (R)-carnitine(in) + 2-oxoglutarate(out). It catalyses the reaction glutarate(in) + (R)-carnitine(out) = glutarate(out) + (R)-carnitine(in). It carries out the reaction prostaglandin E2(out) + 2-oxoglutarate(in) = prostaglandin E2(in) + 2-oxoglutarate(out). The catalysed reaction is prostaglandin E2(out) + glutarate(in) = prostaglandin E2(in) + glutarate(out). The enzyme catalyses urate(in) + glutarate(out) = urate(out) + glutarate(in). It catalyses the reaction taurocholate(out) + 2-oxoglutarate(in) = taurocholate(in) + 2-oxoglutarate(out). It carries out the reaction dehydroepiandrosterone 3-sulfate(out) + 2-oxoglutarate(in) = dehydroepiandrosterone 3-sulfate(in) + 2-oxoglutarate(out). The catalysed reaction is kynurenate(out) + a dicarboxylate(in) = kynurenate(in) + a dicarboxylate(out). The enzyme catalyses (indol-3-yl)acetate(out) + a dicarboxylate(in) = (indol-3-yl)acetate(in) + a dicarboxylate(out). It catalyses the reaction indoxyl sulfate(out) + a dicarboxylate(in) = indoxyl sulfate(in) + a dicarboxylate(out). It carries out the reaction N-benzoylglycine(out) + a dicarboxylate(in) = N-benzoylglycine(in) + a dicarboxylate(out). The catalysed reaction is 3-carboxy-4-methyl-5-propyl-2-furanpropanoate(out) + a dicarboxylate(in) = 3-carboxy-4-methyl-5-propyl-2-furanpropanoate(in) + a dicarboxylate(out). The enzyme catalyses (6R)-L-erythro-5,6,7,8-tetrahydrobiopterin(out) + a dicarboxylate(in) = (6R)-L-erythro-5,6,7,8-tetrahydrobiopterin(in) + a dicarboxylate(out). It catalyses the reaction L-erythro-7,8-dihydrobiopterin(out) + a dicarboxylate(in) = L-erythro-7,8-dihydrobiopterin(in) + a dicarboxylate(out). It carries out the reaction L-sepiapterin(out) + a dicarboxylate(in) = L-sepiapterin(in) + a dicarboxylate(out). In terms of biological role, functions as an organic anion/dicarboxylate exchanger that couples organic anion uptake indirectly to the sodium gradient. Transports organic anions such as estrone 3-sulfate (E1S) and urate in exchange for dicarboxylates such as glutarate or ketoglutarate (2-oxoglutarate). Plays an important role in the excretion of endogenous and exogenous organic anions, especially from the kidney and the brain. E1S transport is pH- and chloride-dependent and may also involve E1S/cGMP exchange. Responsible for the transport of prostaglandin E2 (PGE2) and prostaglandin F2(alpha) (PGF2(alpha)) in the basolateral side of the renal tubule. Involved in the transport of neuroactive tryptophan metabolites kynurenate and xanthurenate. Functions as a biopterin transporters involved in the uptake and the secretion of coenzymes tetrahydrobiopterin (BH4), dihydrobiopterin (BH2) and sepiapterin to urine, thereby determining baseline levels of blood biopterins. May be involved in the basolateral transport of steviol, a metabolite of the popular sugar substitute stevioside. May participate in the detoxification/ renal excretion of drugs and xenobiotics, such as the histamine H(2)-receptor antagonists fexofenadine and cimetidine, the antibiotic benzylpenicillin (PCG), the anionic herbicide 2,4-dichloro-phenoxyacetate (2,4-D), the diagnostic agent p-aminohippurate (PAH), the antiviral acyclovir (ACV), and the mycotoxin ochratoxin (OTA), by transporting these exogenous organic anions across the cell membrane in exchange for dicarboxylates such as 2-oxoglutarate. Contributes to the renal uptake of potent uremic toxins (indoxyl sulfate (IS), indole acetate (IA), hippurate/N-benzoylglycine (HA) and 3-carboxy-4-methyl-5-propyl-2-furanpropionate (CMPF)), pravastatin, PCG, E1S and dehydroepiandrosterone sulfate (DHEAS), and is partly involved in the renal uptake of temocaprilat (an angiotensin-converting enzyme (ACE) inhibitor). May contribute to the release of cortisol in the adrenals. Involved in one of the detoxification systems on the choroid plexus (CP), removes substrates such as E1S or taurocholate (TC), PCG, 2,4-D and PAH, from the cerebrospinal fluid (CSF) to the blood for eventual excretion in urine and bile. Also contributes to the uptake of several other organic compounds such as the prostanoids prostaglandin E(2) and prostaglandin F(2-alpha), L-carnitine, and the therapeutic drugs allopurinol, 6-mercaptopurine (6-MP) and 5-fluorouracil (5-FU). Mediates the transport of PAH, PCG, and the statins pravastatin and pitavastatin, from the cerebrum into the blood circulation across the blood-brain barrier (BBB). In summary, plays a role in the efflux of drugs and xenobiotics, helping reduce their undesired toxicological effects on the body. The polypeptide is Organic anion transporter 3 (SLC22A8) (Sus scrofa (Pig)).